Here is a 235-residue protein sequence, read N- to C-terminus: Purine nucleoside phosphorylase DeoD-type (235 aa).

A purine D-ribonucleoside is bound at residue H4. Residues G20, R24, R43, and 87–90 each bind phosphate; that span reads RVGT. A purine D-ribonucleoside-binding positions include E162, 179 to 181, and 203 to 204; these read EME and SD. D204 serves as the catalytic Proton donor.

It belongs to the PNP/UDP phosphorylase family. In terms of assembly, homohexamer; trimer of homodimers.

The enzyme catalyses a purine D-ribonucleoside + phosphate = a purine nucleobase + alpha-D-ribose 1-phosphate. The catalysed reaction is a purine 2'-deoxy-D-ribonucleoside + phosphate = a purine nucleobase + 2-deoxy-alpha-D-ribose 1-phosphate. In terms of biological role, catalyzes the reversible phosphorolytic breakdown of the N-glycosidic bond in the beta-(deoxy)ribonucleoside molecules, with the formation of the corresponding free purine bases and pentose-1-phosphate. The protein is Purine nucleoside phosphorylase DeoD-type of Bacillus cereus (strain B4264).